Here is an 869-residue protein sequence, read N- to C-terminus: MAHLKINGLVQIRSTNRSKHTRASQWKEAVIEIVERKQKVNLVVSFKLEERRRVFQLGDNVTGVVVSGELGLYHLDLTLRDDTSLLIDKLSSADVEHLKSFLDSSTPCESQQPMEPMSSQDDLESSDPFCGEHQEAACGSLNTTPESGTPLSRKMPLSMSNTTGGQKRGEKQGRKRKTEPSSSSAEVNKDIPKENTPDQKKKSRRYYSRNRGGKAEKAVTLREQEKRSNWKLEPAFNSKSYGRANLDGTILPIATCSDDRDVSIFGLEIITHNGVQSLPDPYLNQLKREGFPNLGNTCYMNSILQSVFGIPTFAKDLLTQGIPWEKVSYDDLIMPLSQLLVLKDIRDVEIKGELLTSVKKSISTVADTFSGNEQNDAHEFLSLCLDQLKLNMEKVNAMWDTERRNTCAGSAGTKRFVCPVGANFEFELHSSIICEGCGEATIKTEVSNYLSIDLHHGTKTHPLSIQKSFDLFFTPEKIEHNCEKCKNKNSVLKYTLRRLPRVLIVHLKRYQVTTDLLPVKSEQPVEISKYLNISSHCHENRKLPFPLANTSPDVSQGMMPGIFNQSMLSKKVISESCDPMVLQVGSSVDAEIQSFQIMYEDEDASEEQQQRGLESGSMLEPELVKTENRILRQKTSLATDSMMGDGYSFLPMLCEPLSIQDPGLAEMGLQEVPENPEFKNYEKINIYGKSDGRTNTELSKLYQNHGSRIKGLFLPASLASVSSQEDPEKDLSRSPELQEDDPHSFAFGSDDSKDGEMGDDLQNYRLVSVVSHFGSSPNSGHYVSDVYDFQKQAWLLYSDVQVFESSDPSIQENRLNSGYIFFYMHNEIFEELLKKASECKVLSTSKEEKRDIDYFSTLLNGLTYILEEF.

2 stretches are compositionally biased toward polar residues: residues 104–120 (SSTPCESQQPMEPMSSQ) and 140–150 (SLNTTPESGTP). The interval 104-226 (SSTPCESQQP…KAVTLREQEK (123 aa)) is disordered. Over residues 187–200 (VNKDIPKENTPDQK) the composition is skewed to basic and acidic residues. Residues 201–212 (KKSRRYYSRNRG) are compositionally biased toward basic residues. The segment covering 213-226 (GKAEKAVTLREQEK) has biased composition (basic and acidic residues). In terms of domain architecture, USP spans 289 to 826 (EGFPNLGNTC…SGYIFFYMHN (538 aa)). Cys-298 functions as the Nucleophile in the catalytic mechanism. Residues 723–754 (SQEDPEKDLSRSPELQEDDPHSFAFGSDDSKD) form a disordered region. Residue His-781 is the Proton acceptor of the active site.

Belongs to the peptidase C19 family. As to expression, predominantly expressed in brain and testis. Highest expression levels in adult brain, especially in the cerebral cortex and hippocampus, and in the forebrain, face, and limb buds of midgestation mouse embryos.

The protein localises to the cytoplasm. The protein resides in the perinuclear region. It catalyses the reaction Thiol-dependent hydrolysis of ester, thioester, amide, peptide and isopeptide bonds formed by the C-terminal Gly of ubiquitin (a 76-residue protein attached to proteins as an intracellular targeting signal).. Functionally, deubiquitinase involved in innate antiviral immunity by mediating 'Lys-48'-linked deubiquitination of CGAS, thereby promoting its stabilization. The polypeptide is Ubiquitin carboxyl-terminal hydrolase 29 (Mus musculus (Mouse)).